Reading from the N-terminus, the 237-residue chain is Oligoribonuclease, mitochondrial (237 aa).

Residues 1-25 constitute a mitochondrion transit peptide; it reads MLGGSLGSRLLRGVGGTRGQFRARG. The 165-residue stretch at 43-207 folds into the Exonuclease domain; the sequence is MVWVDLEMTG…DDISESIKEL (165 aa). The Mg(2+) site is built by Asp-47 and Glu-49. Ser-92 is subject to Phosphoserine. Tyr-122 carries the phosphotyrosine modification. Mg(2+) is bound at residue Asp-147. Lys-173 is modified (N6-acetyllysine). His-194 is a catalytic residue. Asp-199 contributes to the Mg(2+) binding site.

It belongs to the oligoribonuclease family. Homodimer. Homotetramer. Mn(2+) serves as cofactor. The cofactor is Mg(2+).

It localises to the mitochondrion intermembrane space. Its subcellular location is the mitochondrion matrix. The protein localises to the mitochondrion. It is found in the cytoplasm. The protein resides in the nucleus. Functionally, 3'-to-5'exoribonuclease that preferentially degrades DNA and RNA oligonucleotides composed of only two nucleotides. Binds and degrades longer oligonucleotides with a lower affinity. Plays dual roles in mitochondria, scavenging nanoRNAs (small RNA oligonucleotides of &lt;5 nucleotides) that are produced by the degradosome and clearing short RNAs that are generated by RNA processing. Essential for correct initiation of mitochondrial transcription, degrading mitochondrial RNA dinucleotides to prevent RNA-primed transcription at non-canonical sites in the mitochondrial genome. Essential for embryonic development. This chain is Oligoribonuclease, mitochondrial (REXO2), found in Bos taurus (Bovine).